The chain runs to 369 residues: Zeaxanthin 7,8(7',8')-cleavage dioxygenase, chromoplastic (369 aa).

Fe cation is bound by residues His62, His112, His177, and His356.

This sequence belongs to the carotenoid oxygenase family. Fe(2+) is required as a cofactor. As to expression, in the style branches.

The protein resides in the plastid. The protein localises to the chromoplast. The catalysed reaction is all-trans-zeaxanthin + 2 O2 = crocetin dialdehyde + 2 3beta-hydroxy-beta-cyclocitral. Cleaves zeaxanthin symmetrically at the 7-8 and 7'-8' double bonds to produce crocetin dialdehyde and hydroxy-beta-cyclocitral, two water-soluble precursors sequestred in vacuoles and involved in the synthesis of saffron pigment and aroma. The sequence is that of Zeaxanthin 7,8(7',8')-cleavage dioxygenase, chromoplastic (ZCD) from Crocus sativus (Saffron).